The primary structure comprises 341 residues: tRNA N6-adenosine threonylcarbamoyltransferase (341 aa).

Fe cation contacts are provided by histidine 115 and histidine 119. Residues 138–142 (VVSGG), aspartate 171, glycine 184, aspartate 188, and asparagine 279 contribute to the substrate site. Aspartate 307 contributes to the Fe cation binding site.

It belongs to the KAE1 / TsaD family. Fe(2+) is required as a cofactor.

It is found in the cytoplasm. The catalysed reaction is L-threonylcarbamoyladenylate + adenosine(37) in tRNA = N(6)-L-threonylcarbamoyladenosine(37) in tRNA + AMP + H(+). In terms of biological role, required for the formation of a threonylcarbamoyl group on adenosine at position 37 (t(6)A37) in tRNAs that read codons beginning with adenine. Is involved in the transfer of the threonylcarbamoyl moiety of threonylcarbamoyl-AMP (TC-AMP) to the N6 group of A37, together with TsaE and TsaB. TsaD likely plays a direct catalytic role in this reaction. This chain is tRNA N6-adenosine threonylcarbamoyltransferase, found in Clostridium kluyveri (strain NBRC 12016).